The following is a 155-amino-acid chain: NADPH-dependent 7-cyano-7-deazaguanine reductase (155 aa).

The span at 1–20 (MMPNTDVSSLSMLGQQTETA) shows a compositional bias: polar residues. The tract at residues 1-26 (MMPNTDVSSLSMLGQQTETAKSPEEA) is disordered. Catalysis depends on C53, which acts as the Thioimide intermediate. D60 functions as the Proton donor in the catalytic mechanism. Substrate contacts are provided by residues 75-77 (VES) and 94-95 (HE).

The protein belongs to the GTP cyclohydrolase I family. QueF type 1 subfamily.

It is found in the cytoplasm. It catalyses the reaction 7-aminomethyl-7-carbaguanine + 2 NADP(+) = 7-cyano-7-deazaguanine + 2 NADPH + 3 H(+). It functions in the pathway tRNA modification; tRNA-queuosine biosynthesis. Its function is as follows. Catalyzes the NADPH-dependent reduction of 7-cyano-7-deazaguanine (preQ0) to 7-aminomethyl-7-deazaguanine (preQ1). The sequence is that of NADPH-dependent 7-cyano-7-deazaguanine reductase from Rhizobium etli (strain CIAT 652).